A 94-amino-acid polypeptide reads, in one-letter code: Large ribosomal subunit protein uL23 (94 aa).

This sequence belongs to the universal ribosomal protein uL23 family. As to quaternary structure, part of the 50S ribosomal subunit. Contacts protein L29, and trigger factor when it is bound to the ribosome.

One of the early assembly proteins it binds 23S rRNA. One of the proteins that surrounds the polypeptide exit tunnel on the outside of the ribosome. Forms the main docking site for trigger factor binding to the ribosome. The polypeptide is Large ribosomal subunit protein uL23 (Lysinibacillus sphaericus (strain C3-41)).